Consider the following 447-residue polypeptide: Multicopper oxidase mco (447 aa).

Over residues 1–25 the composition is skewed to basic and acidic residues; sequence MMDMKENDQKRNDMMDMKSHDERKN. Residues 1-43 are disordered; that stretch reads MMDMKENDQKRNDMMDMKSHDERKNLNSSQGKNEITFPKVLDP. Residues H107, H109, H147, H149, H375, H378, H380, H428, C429, H430, H434, and M439 each contribute to the Cu cation site.

It belongs to the multicopper oxidase family. Cu cation is required as a cofactor.

It localises to the cytoplasm. In terms of biological role, may be involved in copper homeostasis and oxidative stress response. Oxidizes the substrate 3,3'-dimethoxybenzidine in vitro. Also possesses low levels of phenoloxidase and ferroxidase activities. In Staphylococcus aureus, this protein is Multicopper oxidase mco (mco).